The chain runs to 571 residues: Urease subunit alpha (571 aa).

A Urease domain is found at 132–571; the sequence is GGIDSHIHFI…LPMAQRYFLF (440 aa). The Ni(2+) site is built by H137, H139, and K220. K220 carries the post-translational modification N6-carboxylysine. H222 serves as a coordination point for substrate. Ni(2+) is bound by residues H249 and H275. H323 (proton donor) is an active-site residue. D363 lines the Ni(2+) pocket.

The protein belongs to the metallo-dependent hydrolases superfamily. Urease alpha subunit family. Heterotrimer of UreA (gamma), UreB (beta) and UreC (alpha) subunits. Three heterotrimers associate to form the active enzyme. Requires Ni cation as cofactor. Carboxylation allows a single lysine to coordinate two nickel ions.

The protein localises to the cytoplasm. The catalysed reaction is urea + 2 H2O + H(+) = hydrogencarbonate + 2 NH4(+). It participates in nitrogen metabolism; urea degradation; CO(2) and NH(3) from urea (urease route): step 1/1. The polypeptide is Urease subunit alpha (Kocuria rhizophila (strain ATCC 9341 / DSM 348 / NBRC 103217 / DC2201)).